Consider the following 617-residue polypeptide: NADPH-dependent diflavin oxidoreductase 1 (617 aa).

In terms of domain architecture, Flavodoxin-like spans 3–147 (PMILYASETG…AFLPWLQQTL (145 aa)). Residues 9–14 (SETGNA), 56–59 (STHG), 94–103 (LGDSSYERFC), and Glu129 each bind FMN. An FAD-binding FR-type domain is found at 226–465 (DDWVWATLKK…HIASPTLFLP (240 aa)). Residues 404-407 (RQFS) and 438-441 (GLCS) each bind FAD. NADP(+) is bound by residues Thr479, 534–535 (SR), and 540–544 (RIYVQ). Trp617 lines the FAD pocket.

The protein belongs to the NADPH-dependent diflavin oxidoreductase NDOR1 family. In the N-terminal section; belongs to the flavodoxin family. It in the C-terminal section; belongs to the flavoprotein pyridine nucleotide cytochrome reductase family. In terms of assembly, interacts with DRE2; as part of the cytosolic iron-sulfur (Fe-S) protein assembly (CIA) machinery. Requires FAD as cofactor. It depends on FMN as a cofactor.

It localises to the cytoplasm. Its subcellular location is the mitochondrion. The catalysed reaction is 2 oxidized [2Fe-2S]-[protein] + NADPH = 2 reduced [2Fe-2S]-[protein] + NADP(+) + H(+). Its function is as follows. NADPH-dependent reductase which is a central component of the cytosolic iron-sulfur (Fe-S) protein assembly (CIA) machinery. Transfers electrons from NADPH via its FAD and FMN prosthetic groups to the [2Fe-2S] cluster of DRE2, another key component of the CIA machinery. In turn, this reduced cluster provides electrons for assembly of cytosolic iron-sulfur cluster proteins. Positively controls H(2)O(2)-induced cell death. The sequence is that of NADPH-dependent diflavin oxidoreductase 1 from Cryptococcus neoformans var. neoformans serotype D (strain B-3501A) (Filobasidiella neoformans).